The following is a 563-amino-acid chain: Putative GMC-type oxidoreductase L128 (563 aa).

Residues 1-21 (MTSSIVLKFFLIATLLVIANS) form the signal peptide. 48-77 (DYVIVGGGAAGSVLLDKCISYGYKCTLIER) provides a ligand contact to FAD. Residue H504 is the Proton acceptor of the active site.

This sequence belongs to the GMC oxidoreductase family. FAD serves as cofactor.

The sequence is that of Putative GMC-type oxidoreductase L128 from Acanthamoeba polyphaga mimivirus (APMV).